Reading from the N-terminus, the 56-residue chain is Prokaryotic ubiquitin-like protein UBact (56 aa).

A compositionally biased stretch (basic and acidic residues) spans 1–28; that stretch reads MPQDQQRKKQFDPNPNRDDSQRKTPVDK. Residues 1 to 33 are disordered; that stretch reads MPQDQQRKKQFDPNPNRDDSQRKTPVDKEIDDI. Gln-56 is modified (deamidated glutamine). Gln-56 participates in a covalent cross-link: Isoglutamyl lysine isopeptide (Gln-Lys) (interchain with K-? in acceptor proteins).

This sequence belongs to the ubiquitin-like protein UBact family. May be modified by deamidation of its C-terminal glutamine to glutamate by the adjacently encoded deamidase. This could be a prerequisite to the subsequent conjugation, as shown in the other prokaryotic ubiquitin-like protein Pup.

In terms of biological role, may function as a protein modifier covalently attached to lysine residues of substrate proteins. This may serve to target the modified proteins for degradation by proteasomes. This is Prokaryotic ubiquitin-like protein UBact from Yanofskybacteria sp. (strain GW2011_GWA1_39_13).